The following is a 422-amino-acid chain: Putative FBD-associated F-box protein At1g55030 (422 aa).

The region spanning 8-60 (TDMISQLPEPLILQILGSLPTKVAITTSVLSKQWQSHWKMMPKLEFDSFLRRL) is the F-box domain. LRR repeat units lie at residues 132-153 (TLET…VYLK), 154-175 (SLKT…INLL), and 180-201 (NLQD…TIAV). Positions 342–391 (EWNQPKNVPECLHHLEKFIWEGYKWKREEIEVAKYILKNTNRLKRAIFSL) constitute an FBD domain.

The sequence is that of Putative FBD-associated F-box protein At1g55030 from Arabidopsis thaliana (Mouse-ear cress).